Here is a 199-residue protein sequence, read N- to C-terminus: Thymidine kinase (199 aa).

ATP contacts are provided by residues 9–16 (GAMSSGKT) and 93–96 (DEAQ). The active-site Proton acceptor is the E94. Zn(2+)-binding residues include C151, C154, C188, and H191.

This sequence belongs to the thymidine kinase family. As to quaternary structure, homotetramer.

Its subcellular location is the cytoplasm. The enzyme catalyses thymidine + ATP = dTMP + ADP + H(+). The protein is Thymidine kinase of Lactobacillus acidophilus (strain ATCC 700396 / NCK56 / N2 / NCFM).